A 365-amino-acid polypeptide reads, in one-letter code: Glycerol dehydrogenase (365 aa).

The NAD(+) site is built by Asp-37, Gly-94, Lys-95, Thr-116, and Ser-119. Residue Asp-121 coordinates glycerol. Ser-125, Leu-127, and Tyr-131 together coordinate NAD(+). Mn(2+)-binding residues include Asp-171, His-254, and His-271. His-254 contributes to the glycerol binding site.

This sequence belongs to the iron-containing alcohol dehydrogenase family. In terms of assembly, homohexamer. It depends on Mn(2+) as a cofactor.

The catalysed reaction is glycerol + NAD(+) = dihydroxyacetone + NADH + H(+). The enzyme catalyses hydroxyacetone + NADH + H(+) = (S)-propane-1,2-diol + NAD(+). The protein operates within polyol metabolism; glycerol fermentation; glycerone phosphate from glycerol (oxidative route): step 1/2. Inhibited by zinc. Its function is as follows. Catalyzes the NAD-dependent oxidation of glycerol to dihydroxyacetone (glycerone). Allows microorganisms to utilize glycerol as a source of carbon under anaerobic conditions. Exhibits a rather broad substrate specificity since it can also oxidize 1,2-propanediol and 2,3-butanediol and reduce dihydroxyacetone. Cannot use NADP(+) as an electron acceptor for the oxidation of glycerol. This chain is Glycerol dehydrogenase, found in Citrobacter freundii.